A 411-amino-acid chain; its full sequence is Putative competence-damage inducible protein (411 aa).

This sequence belongs to the CinA family.

This Caldicellulosiruptor bescii (strain ATCC BAA-1888 / DSM 6725 / KCTC 15123 / Z-1320) (Anaerocellum thermophilum) protein is Putative competence-damage inducible protein.